We begin with the raw amino-acid sequence, 113 residues long: Large ribosomal subunit protein bL19 (113 aa).

The protein belongs to the bacterial ribosomal protein bL19 family.

Its function is as follows. This protein is located at the 30S-50S ribosomal subunit interface and may play a role in the structure and function of the aminoacyl-tRNA binding site. This is Large ribosomal subunit protein bL19 from Corynebacterium efficiens (strain DSM 44549 / YS-314 / AJ 12310 / JCM 11189 / NBRC 100395).